We begin with the raw amino-acid sequence, 375 residues long: Queuine tRNA-ribosyltransferase (375 aa).

The active-site Proton acceptor is Asp90. Residues 90-94, Asp144, Gln190, and Gly217 each bind substrate; that span reads DSGGF. The tract at residues 248–254 is RNA binding; it reads GIGTPHY. The active-site Nucleophile is the Asp267. An RNA binding; important for wobble base 34 recognition region spans residues 272–276; sequence TRIAR. Zn(2+)-binding residues include Cys305, Cys307, Cys310, and His336.

Belongs to the queuine tRNA-ribosyltransferase family. In terms of assembly, homodimer. Within each dimer, one monomer is responsible for RNA recognition and catalysis, while the other monomer binds to the replacement base PreQ1. It depends on Zn(2+) as a cofactor.

The enzyme catalyses 7-aminomethyl-7-carbaguanine + guanosine(34) in tRNA = 7-aminomethyl-7-carbaguanosine(34) in tRNA + guanine. The protein operates within tRNA modification; tRNA-queuosine biosynthesis. Functionally, catalyzes the base-exchange of a guanine (G) residue with the queuine precursor 7-aminomethyl-7-deazaguanine (PreQ1) at position 34 (anticodon wobble position) in tRNAs with GU(N) anticodons (tRNA-Asp, -Asn, -His and -Tyr). Catalysis occurs through a double-displacement mechanism. The nucleophile active site attacks the C1' of nucleotide 34 to detach the guanine base from the RNA, forming a covalent enzyme-RNA intermediate. The proton acceptor active site deprotonates the incoming PreQ1, allowing a nucleophilic attack on the C1' of the ribose to form the product. After dissociation, two additional enzymatic reactions on the tRNA convert PreQ1 to queuine (Q), resulting in the hypermodified nucleoside queuosine (7-(((4,5-cis-dihydroxy-2-cyclopenten-1-yl)amino)methyl)-7-deazaguanosine). The chain is Queuine tRNA-ribosyltransferase from Borrelia duttonii (strain Ly).